We begin with the raw amino-acid sequence, 569 residues long: Urease subunit beta (569 aa).

The region spanning 131–569 (GGIDTHIHFI…VSLGQLYCLF (439 aa)) is the Urease domain. Residues His-136, His-138, and Lys-219 each coordinate Ni(2+). At Lys-219 the chain carries N6-carboxylysine. Substrate is bound at residue His-221. The Ni(2+) site is built by His-248 and His-274. Residue His-322 is the Proton donor of the active site. A Ni(2+)-binding site is contributed by Asp-362.

This sequence belongs to the metallo-dependent hydrolases superfamily. Urease alpha subunit family. Heterohexamer of 3 UreA (alpha) and 3 UreB (beta) subunits. It depends on Ni cation as a cofactor. In terms of processing, carboxylation allows a single lysine to coordinate two nickel ions.

The protein localises to the cytoplasm. The enzyme catalyses urea + 2 H2O + H(+) = hydrogencarbonate + 2 NH4(+). The protein operates within nitrogen metabolism; urea degradation; CO(2) and NH(3) from urea (urease route): step 1/1. This chain is Urease subunit beta, found in Helicobacter hepaticus (strain ATCC 51449 / 3B1).